The primary structure comprises 270 residues: 4-hydroxy-tetrahydrodipicolinate reductase (270 aa).

7-12 (GVSGRM) contributes to the NAD(+) binding site. R34 contributes to the NADP(+) binding site. NAD(+) is bound by residues 97–99 (GTT) and 121–124 (SGNM). Residue H155 is the Proton donor/acceptor of the active site. Residue H156 participates in (S)-2,3,4,5-tetrahydrodipicolinate binding. K159 (proton donor) is an active-site residue. Residue 165–166 (GT) coordinates (S)-2,3,4,5-tetrahydrodipicolinate.

It belongs to the DapB family.

Its subcellular location is the cytoplasm. The enzyme catalyses (S)-2,3,4,5-tetrahydrodipicolinate + NAD(+) + H2O = (2S,4S)-4-hydroxy-2,3,4,5-tetrahydrodipicolinate + NADH + H(+). It carries out the reaction (S)-2,3,4,5-tetrahydrodipicolinate + NADP(+) + H2O = (2S,4S)-4-hydroxy-2,3,4,5-tetrahydrodipicolinate + NADPH + H(+). The protein operates within amino-acid biosynthesis; L-lysine biosynthesis via DAP pathway; (S)-tetrahydrodipicolinate from L-aspartate: step 4/4. Its function is as follows. Catalyzes the conversion of 4-hydroxy-tetrahydrodipicolinate (HTPA) to tetrahydrodipicolinate. In Allorhizobium ampelinum (strain ATCC BAA-846 / DSM 112012 / S4) (Agrobacterium vitis (strain S4)), this protein is 4-hydroxy-tetrahydrodipicolinate reductase.